Here is a 77-residue protein sequence, read N- to C-terminus: ATP synthase subunit c (77 aa).

2 helical membrane-spanning segments follow: residues 13–33 and 55–75; these read IATV…GIVA and FLGI…YFIF.

Belongs to the ATPase C chain family. As to quaternary structure, F-type ATPases have 2 components, F(1) - the catalytic core - and F(0) - the membrane proton channel. F(1) has five subunits: alpha(3), beta(3), gamma(1), delta(1), epsilon(1). F(0) has three main subunits: a(1), b(2) and c(10-14). The alpha and beta chains form an alternating ring which encloses part of the gamma chain. F(1) is attached to F(0) by a central stalk formed by the gamma and epsilon chains, while a peripheral stalk is formed by the delta and b chains.

It localises to the cell membrane. In terms of biological role, f(1)F(0) ATP synthase produces ATP from ADP in the presence of a proton or sodium gradient. F-type ATPases consist of two structural domains, F(1) containing the extramembraneous catalytic core and F(0) containing the membrane proton channel, linked together by a central stalk and a peripheral stalk. During catalysis, ATP synthesis in the catalytic domain of F(1) is coupled via a rotary mechanism of the central stalk subunits to proton translocation. Its function is as follows. Key component of the F(0) channel; it plays a direct role in translocation across the membrane. A homomeric c-ring of between 10-14 subunits forms the central stalk rotor element with the F(1) delta and epsilon subunits. This is ATP synthase subunit c from Clavibacter michiganensis subsp. michiganensis (strain NCPPB 382).